A 344-amino-acid polypeptide reads, in one-letter code: uncharacterized protein (344 aa).

The disordered stretch occupies residues 304–344; sequence AVPAPTPRRPLDSVLQIRQTPEKGRNASDRNARETGWFSPP. Over residues 323–336 the composition is skewed to basic and acidic residues; sequence TPEKGRNASDRNAR.

This is an uncharacterized protein from Mycobacterium tuberculosis (strain CDC 1551 / Oshkosh).